Here is a 96-residue protein sequence, read N- to C-terminus: NADH-quinone oxidoreductase subunit K (96 aa).

The next 3 membrane-spanning stretches (helical) occupy residues 1–21 (MNYIVLAAIVFTIGAVGVLVR), 25–45 (IIVFMCVELMLNACNLAFVAF), and 56–76 (VIAFFVMVVAAAEVVVGLAII).

The protein belongs to the complex I subunit 4L family. As to quaternary structure, NDH-1 is composed of 14 different subunits. Subunits NuoA, H, J, K, L, M, N constitute the membrane sector of the complex.

The protein resides in the cell membrane. The catalysed reaction is a quinone + NADH + 5 H(+)(in) = a quinol + NAD(+) + 4 H(+)(out). NDH-1 shuttles electrons from NADH, via FMN and iron-sulfur (Fe-S) centers, to quinones in the respiratory chain. The immediate electron acceptor for the enzyme in this species is believed to be a menaquinone. Couples the redox reaction to proton translocation (for every two electrons transferred, four hydrogen ions are translocated across the cytoplasmic membrane), and thus conserves the redox energy in a proton gradient. The sequence is that of NADH-quinone oxidoreductase subunit K from Thermobifida fusca (strain YX).